We begin with the raw amino-acid sequence, 510 residues long: 2-isopropylmalate synthase (510 aa).

Positions 5-267 (LVIFDTTLRD…DTRIDTTQIV (263 aa)) constitute a Pyruvate carboxyltransferase domain. D14, H202, H204, and N238 together coordinate Mn(2+). Residues 392–510 (RLLSLVAHSE…SSLERTHPQV (119 aa)) form a regulatory domain region.

The protein belongs to the alpha-IPM synthase/homocitrate synthase family. LeuA type 1 subfamily. In terms of assembly, homodimer. Mn(2+) is required as a cofactor.

The protein resides in the cytoplasm. It carries out the reaction 3-methyl-2-oxobutanoate + acetyl-CoA + H2O = (2S)-2-isopropylmalate + CoA + H(+). The protein operates within amino-acid biosynthesis; L-leucine biosynthesis; L-leucine from 3-methyl-2-oxobutanoate: step 1/4. Catalyzes the condensation of the acetyl group of acetyl-CoA with 3-methyl-2-oxobutanoate (2-ketoisovalerate) to form 3-carboxy-3-hydroxy-4-methylpentanoate (2-isopropylmalate). This Nitrosomonas eutropha (strain DSM 101675 / C91 / Nm57) protein is 2-isopropylmalate synthase.